Reading from the N-terminus, the 349-residue chain is Gibberellin 3-beta-dioxygenase 3 (349 aa).

Residues 201-305 enclose the Fe2OG dioxygenase domain; that stretch reads SIQSFLQLNS…RVSAAYFAGP (105 aa). H226, D228, and H286 together coordinate Fe cation. The active site involves R296.

Belongs to the iron/ascorbate-dependent oxidoreductase family. GA3OX subfamily. The cofactor is L-ascorbate. Requires Fe cation as cofactor. As to expression, expressed in flower clusters and siliques.

It catalyses the reaction gibberellin A20 + 2-oxoglutarate + O2 = gibberellin A1 + succinate + CO2. It functions in the pathway plant hormone biosynthesis; gibberellin biosynthesis. In terms of biological role, converts the inactive gibberellin (GA) precursors GA9 and GA20 in the bioactives gibberellins GA4 and GA1. Involved in the production of bioactive GA for reproductive development. The chain is Gibberellin 3-beta-dioxygenase 3 (GA3OX3) from Arabidopsis thaliana (Mouse-ear cress).